A 323-amino-acid polypeptide reads, in one-letter code: 2-methylene-furan-3-one reductase (323 aa).

NADP(+)-binding positions include Lys-59, 174–175, 197–200, Tyr-216, Ile-254, 265–267, and 312–313; these read GV, STKK, FVL, and RA. Lys-59 lines the substrate pocket.

Belongs to the zinc-containing alcohol dehydrogenase family. Quinone oxidoreductase subfamily. As to quaternary structure, monomer. In terms of processing, the N-terminus is blocked. As to expression, expressed in parenchyma tissues of red fruits. Not found in vascular tissues. Also detected in the achenes.

It catalyses the reaction 4-hydroxy-2,5-dimethyl-furan-3(2H)-one + NADP(+) = 4-hydroxy-5-methyl-2-methylenefuran-3(2H)-one + NADPH + H(+). In terms of biological role, enone oxidoreductase involved in the biosynthesis of 4-hydroxy-2,5-dimethyl-3(2H)-furanone (HDMF or furaneol), the key flavor compound in strawberries. Can use both NADH and NADPH as the electron donor. This Fragaria ananassa (Strawberry) protein is 2-methylene-furan-3-one reductase (EO).